The following is a 241-amino-acid chain: Queuine tRNA-ribosyltransferase-like protein (241 aa).

It belongs to the queuine tRNA-ribosyltransferase family.

In Plasmodium falciparum, this protein is Queuine tRNA-ribosyltransferase-like protein.